Reading from the N-terminus, the 446-residue chain is Sterile alpha motif domain-containing protein 7 (446 aa).

A required for localization to nuclear polycomb bodies region spans residues histidine 94–alanine 168. 2 disordered regions span residues asparagine 187–glutamate 207 and lysine 225–aspartate 277. The segment covering proline 232–alanine 249 has biased composition (polar residues). One can recognise an SAM domain in the interval tryptophan 327–methionine 392.

In terms of assembly, monomer, homodimer and homooligomer. Component of a Polycomb group (PcG) multiprotein PRC1-like complex. Interacts with PHC2, NR2E3 and SAMD11. Interacts with RNF1 in a PHC2-dependent manner. As to expression, expressed in the retina (at protein level). Expressed in the retinal inner and outer nuclear layers.

It localises to the nucleus. Its subcellular location is the cytoplasm. Component of a Polycomb group (PcG) multiprotein PRC1-like complex, essential for establishing rod photoreceptor cell identity and function by silencing nonrod gene expression in developing rod photoreceptor cells. Via its association with the PRC1-like complex, promotes epigenetic repressive marks H3K27me3 and H2AK119ub marks in nonrod genes, silencing their transcription. Represses Crx-controlled photoreceptor-specific gene expression. This Homo sapiens (Human) protein is Sterile alpha motif domain-containing protein 7 (SAMD7).